Consider the following 310-residue polypeptide: MARTSESSPYVEFDRKQWRTLRKSTPLVLTEEELYGLRGLGEQIDLEEVAEVYLPLSRLIHLQVAARQRLFAATATFLGEKHPDQQVPFVIGVAGSVAVGKSTTARVLQALLARWEHHPRVDLVTTDGFLYPTAELNRRGIMHRKGFPESYDRRKLLRFVTEVKSGAEEVAAPVYSHISYDIIPGQYHLIRQPDILIIEGLNVLQTGPRLMVSDLFDFSIYVDARIEDIENWYIQRFLALRKTSFSDPDAHFHHYAGLSDRDATSAAQEIWHNINRPNLVENILPTRPRATLVLRKDANHSINRLRLRKL.

An ATP-binding site is contributed by 95-102 (GSVAVGKS).

This sequence belongs to the prokaryotic pantothenate kinase family.

The protein localises to the cytoplasm. The catalysed reaction is (R)-pantothenate + ATP = (R)-4'-phosphopantothenate + ADP + H(+). The protein operates within cofactor biosynthesis; coenzyme A biosynthesis; CoA from (R)-pantothenate: step 1/5. The protein is Pantothenate kinase of Rhodococcus opacus (strain B4).